The primary structure comprises 500 residues: Nuclear distribution protein PAC1 (500 aa).

WD repeat units follow at residues 125 to 164 (HNGHPVTAIDIHPFQPIMATASQDGTIVIWNLLNLTEPQQ), 169 to 219 (AHTR…NLKA), 225 to 265 (GHEN…IVLS), 268 to 310 (GHSN…LMIG), 338 to 378 (QNEL…IRSD), 397 to 436 (EHKSWVKDIAIHPNSRFIISVGDDRKINIWDLGLLLESNL), and 459 to 500 (IKDQ…EYIL).

It belongs to the WD repeat LIS1/nudF family. In terms of assembly, self-associates. Interacts with NDL1 and dynein.

Its subcellular location is the cytoplasm. It is found in the cytoskeleton. The protein localises to the spindle pole. Functionally, positively regulates the activity of the minus-end directed microtubule motor protein dynein. Plays a central role in positioning the mitotic spindle at the bud neck during cell division. Targets cytoplasmic dynein to microtubule plus ends, thereby promoting dynein-mediated microtubule sliding along the bud cortex and consequently the movement of the mitotic spindle to the bud neck. The chain is Nuclear distribution protein PAC1 from Komagataella phaffii (strain GS115 / ATCC 20864) (Yeast).